The sequence spans 149 residues: Heat shock protein beta-3 (149 aa).

The region spanning 47-149 (KARAAQAPPV…VEVKDSAGTK (103 aa)) is the sHSP domain.

The protein belongs to the small heat shock protein (HSP20) family.

The protein resides in the cytoplasm. It localises to the nucleus. Functionally, inhibitor of actin polymerization. This chain is Heat shock protein beta-3 (HSPB3), found in Bos taurus (Bovine).